The chain runs to 647 residues: ATP-dependent zinc metalloprotease FtsH (647 aa).

The segment at 1–33 is disordered; sequence MARKSDEDTNPMDKFMDRLRGSPGDGGPGRPDP. At 1-39 the chain is on the cytoplasmic side; it reads MARKSDEDTNPMDKFMDRLRGSPGDGGPGRPDPSQRKVH. A helical membrane pass occupies residues 40-60; it reads FSIWYFILALLLIVWMQTYMG. Residues 61–134 are Periplasmic-facing; that stretch reads EQQSEKISYS…RFSGDVQNPW (74 aa). Residues 135 to 155 form a helical membrane-spanning segment; the sequence is LGLITWWLLPFAIMIFFWSFL. The Cytoplasmic portion of the chain corresponds to 156-647; that stretch reads MRRMGGGPQG…DPVQVEGGAA (492 aa). 227-234 contacts ATP; the sequence is GAPGTGKT. Histidine 449 contacts Zn(2+). Glutamate 450 is a catalytic residue. 2 residues coordinate Zn(2+): histidine 453 and aspartate 526.

The protein in the central section; belongs to the AAA ATPase family. This sequence in the C-terminal section; belongs to the peptidase M41 family. As to quaternary structure, homohexamer. Zn(2+) is required as a cofactor.

It localises to the cell inner membrane. Functionally, acts as a processive, ATP-dependent zinc metallopeptidase for both cytoplasmic and membrane proteins. Plays a role in the quality control of integral membrane proteins. The polypeptide is ATP-dependent zinc metalloprotease FtsH (Syntrophobacter fumaroxidans (strain DSM 10017 / MPOB)).